A 1183-amino-acid polypeptide reads, in one-letter code: Putative ATP-dependent RNA helicase PB1A10.06c (1183 aa).

Disordered stretches follow at residues methionine 1–leucine 92 and glutamate 165–arginine 315. Basic and acidic residues predominate over residues valine 60–glutamate 81. Low complexity-rich tracts occupy residues glutamate 165–threonine 176 and threonine 184–threonine 196. Residues glutamate 224 to serine 251 are compositionally biased toward acidic residues. Residues glutamate 252–proline 270 show a composition bias toward basic and acidic residues. Over residues glutamate 292 to aspartate 308 the composition is skewed to acidic residues. Residues methionine 408–isoleucine 585 form the Helicase ATP-binding domain. Glycine 421 to threonine 428 contacts ATP. A DEAH box motif is present at residues aspartate 522–histidine 525. One can recognise a Helicase C-terminal domain in the interval alanine 611–asparagine 831. Residues glutamate 673 to aspartate 683 are compositionally biased toward acidic residues. The tract at residues glutamate 673–aspartate 696 is disordered.

It belongs to the DEAD box helicase family. DEAH subfamily.

The protein localises to the nucleus. It is found in the nucleolus. The catalysed reaction is ATP + H2O = ADP + phosphate + H(+). The polypeptide is Putative ATP-dependent RNA helicase PB1A10.06c (Schizosaccharomyces pombe (strain 972 / ATCC 24843) (Fission yeast)).